Here is a 154-residue protein sequence, read N- to C-terminus: Endoribonuclease YbeY (154 aa).

Residues His113, His117, and His123 each contribute to the Zn(2+) site.

Belongs to the endoribonuclease YbeY family. The cofactor is Zn(2+).

The protein resides in the cytoplasm. Single strand-specific metallo-endoribonuclease involved in late-stage 70S ribosome quality control and in maturation of the 3' terminus of the 16S rRNA. The chain is Endoribonuclease YbeY from Vibrio vulnificus (strain CMCP6).